We begin with the raw amino-acid sequence, 425 residues long: Histidine--tRNA ligase (425 aa).

This sequence belongs to the class-II aminoacyl-tRNA synthetase family. As to quaternary structure, homodimer.

The protein localises to the cytoplasm. The enzyme catalyses tRNA(His) + L-histidine + ATP = L-histidyl-tRNA(His) + AMP + diphosphate + H(+). This chain is Histidine--tRNA ligase, found in Shewanella sp. (strain W3-18-1).